The chain runs to 533 residues: Fimbrial subunit type 1 (533 aa).

The signal sequence occupies residues 1-30; the sequence is MHSLNTRRGLGLAAAMTLAAGALVAPTGAA. The LPXTG sorting signal motif lies at 496-500; it reads LPLTG. Thr499 bears the Pentaglycyl murein peptidoglycan amidated threonine mark. The propeptide at 500–533 is removed by sortase; it reads GANGVIFLTIAGALLVAGGAVVAYANKRRHVAKH.

The protein localises to the secreted. Its subcellular location is the cell wall. It localises to the fimbrium. Its function is as follows. Major fimbrial subunit of A.viscosus. This Actinomyces viscosus protein is Fimbrial subunit type 1.